Reading from the N-terminus, the 367-residue chain is Flagellar P-ring protein (367 aa).

Positions 1–24 (MLRPIITLLCLTLMLCTAAGPAGA) are cleaved as a signal peptide.

Belongs to the FlgI family. The basal body constitutes a major portion of the flagellar organelle and consists of four rings (L,P,S, and M) mounted on a central rod.

The protein resides in the periplasm. It is found in the bacterial flagellum basal body. Assembles around the rod to form the L-ring and probably protects the motor/basal body from shearing forces during rotation. The sequence is that of Flagellar P-ring protein from Syntrophotalea carbinolica (strain DSM 2380 / NBRC 103641 / GraBd1) (Pelobacter carbinolicus).